We begin with the raw amino-acid sequence, 420 residues long: Glutamate-1-semialdehyde 2,1-aminomutase (420 aa).

Position 259 is an N6-(pyridoxal phosphate)lysine (lysine 259).

It belongs to the class-III pyridoxal-phosphate-dependent aminotransferase family. HemL subfamily. Pyridoxal 5'-phosphate is required as a cofactor.

The protein resides in the cytoplasm. The catalysed reaction is (S)-4-amino-5-oxopentanoate = 5-aminolevulinate. It participates in porphyrin-containing compound metabolism; protoporphyrin-IX biosynthesis; 5-aminolevulinate from L-glutamyl-tRNA(Glu): step 2/2. This chain is Glutamate-1-semialdehyde 2,1-aminomutase, found in Sulfolobus acidocaldarius (strain ATCC 33909 / DSM 639 / JCM 8929 / NBRC 15157 / NCIMB 11770).